The following is a 439-amino-acid chain: Lactamase-like protein nscB (439 aa).

Residues His214, His216, Asp218, and His219 each contribute to the Zn(2+) site. The active-site Proton donor/acceptor is the Asp218.

It belongs to the metallo-beta-lactamase superfamily. It depends on Zn(2+) as a cofactor.

Its pathway is secondary metabolite biosynthesis. Functionally, lactamase-like protein; part of the gene cluster that mediates the biosynthesis of neosartoricin B, a prenylated anthracenone that probably exhibits T-cell antiproliferative activity, suggestive of a physiological role as an immunosuppressive agent. The non-reducing polyketide synthase nscA probably synthesizes and cyclizes the decaketide backbone. The hydrolase nscB then mediates the product release through hydrolysis followed by spontaneous decarboxylation. The prenyltransferase nscD catalyzes the addition of the dimethylallyl group to the aromatic C5. The FAD-dependent monooxygenase nscC is then responsible for the stereospecific hydroxylation at C2. Neosartoricin B can be converted into two additional compounds neosartoricins C and D. Neosartoricin C is a spirocyclic compound that is cyclized through the attack of C3 hydroxyl on C14, followed by dehydration. On the other hand, neosartoricin D is a further cyclized compound in which attack of C2 on C14 in neosartoricin C results in the formation of the acetal-containing dioxabicyclo-octanone ring. Both of these compounds are novel and possibly represent related metabolites of the gene cluster. The protein is Lactamase-like protein nscB of Arthroderma benhamiae (strain ATCC MYA-4681 / CBS 112371) (Trichophyton mentagrophytes).